The sequence spans 716 residues: Polyribonucleotide nucleotidyltransferase (716 aa).

Positions 490 and 496 each coordinate Mg(2+). The KH domain maps to 556-615 (PKIETLTIPTDKIREVIGSGGKVIREIVETSGAKVDINDDGVIKIASNDQAAIKKAYDMI). Residues 625–693 (GQIYTGKVVK…ERGKVRLGMK (69 aa)) form the S1 motif domain. Residues 695 to 716 (VDQETGQEIQPEKKEREEAGEA) are disordered. A compositionally biased stretch (basic and acidic residues) spans 704–716 (QPEKKEREEAGEA).

It belongs to the polyribonucleotide nucleotidyltransferase family. Requires Mg(2+) as cofactor.

The protein resides in the cytoplasm. The enzyme catalyses RNA(n+1) + phosphate = RNA(n) + a ribonucleoside 5'-diphosphate. Involved in mRNA degradation. Catalyzes the phosphorolysis of single-stranded polyribonucleotides processively in the 3'- to 5'-direction. The protein is Polyribonucleotide nucleotidyltransferase of Cereibacter sphaeroides (strain KD131 / KCTC 12085) (Rhodobacter sphaeroides).